Here is a 504-residue protein sequence, read N- to C-terminus: Plasma protease C1 inhibitor (504 aa).

The N-terminal stretch at 1-22 is a signal peptide; that stretch reads MASRLTPLTLLLLLLAGDRAFS. The tract at residues 22 to 67 is disordered; sequence SDPEATSHSTQDPLEAQAKSRESFPERDDSWSPPEPTVLPSTWPTT. Residues 39–51 are compositionally biased toward basic and acidic residues; sequence AKSRESFPERDDS. Asn75, Asn83, and Asn107 each carry an N-linked (GlcNAc...) asparagine glycan. Residues 85–124 show a composition bias toward polar residues; that stretch reads SFSQHSQPAAQLPTDSPGQPPLNSSSQPSTASDLPTQATT. The interval 85-141 is disordered; it reads SFSQHSQPAAQLPTDSPGQPPLNSSSQPSTASDLPTQATTEPFCPEPLAQCSDSDRD. Intrachain disulfides connect Cys128–Cys432 and Cys135–Cys210. Asn243 and Asn356 each carry an N-linked (GlcNAc...) asparagine glycan.

Belongs to the serpin family. In terms of assembly, interacts with MASP1.

The protein resides in the secreted. In terms of biological role, serine protease inhibitor, which acrs as a regulator of the classical complement pathway. Forms a proteolytically inactive stoichiometric complex with the C1r or C1s proteases. May also regulate blood coagulation, fibrinolysis and the generation of kinins. Very efficient inhibitor of FXIIa. Inhibits chymotrypsin and kallikrein. The polypeptide is Plasma protease C1 inhibitor (Serping1) (Mus musculus (Mouse)).